The primary structure comprises 40 residues: Dolichyl-diphosphooligosaccharide--protein glycosyltransferase subunit 4 (40 aa).

Topologically, residues 1 to 4 (MITD) are lumenal. A helical membrane pass occupies residues 5–25 (VQLAIFSNVLGVFLFLLVVAY). Topologically, residues 26–40 (HYINANTGKSSIKTK) are cytoplasmic.

This sequence belongs to the OST4 family. Component of the oligosaccharyltransferase (OST) complex.

The protein localises to the endoplasmic reticulum membrane. Its function is as follows. Subunit of the oligosaccharyl transferase (OST) complex that catalyzes the initial transfer of a defined glycan (Glc(3)Man(9)GlcNAc(2) in eukaryotes) from the lipid carrier dolichol-pyrophosphate to an asparagine residue within an Asn-X-Ser/Thr consensus motif in nascent polypeptide chains, the first step in protein N-glycosylation. N-glycosylation occurs cotranslationally and the complex associates with the Sec61 complex at the channel-forming translocon complex that mediates protein translocation across the endoplasmic reticulum (ER). All subunits are required for a maximal enzyme activity. This chain is Dolichyl-diphosphooligosaccharide--protein glycosyltransferase subunit 4, found in Drosophila virilis (Fruit fly).